Consider the following 129-residue polypeptide: UPF0102 protein Cpar_0015 (129 aa).

Belongs to the UPF0102 family.

In Chlorobaculum parvum (strain DSM 263 / NCIMB 8327) (Chlorobium vibrioforme subsp. thiosulfatophilum), this protein is UPF0102 protein Cpar_0015.